Here is a 117-residue protein sequence, read N- to C-terminus: Ig heavy chain V region MOPC 104E (117 aa).

An Ig-like domain is found at 1 to 116; sequence EVQLQQSGPE…WGAGTTVTVS (116 aa). A disulfide bridge links cysteine 22 with cysteine 96. Asparagine 55 carries N-linked (GlcNAc...) (high mannose) asparagine; atypical glycosylation.

In Mus musculus (Mouse), this protein is Ig heavy chain V region MOPC 104E.